Consider the following 514-residue polypeptide: Protein Tube (514 aa).

Disordered regions lie at residues 226 to 250 (VPQQLENGTSSTVPVPPPRAARSSR), 255 to 274 (TASNVAPTTASNAPSASNTA), 324 to 343 (LDAGKSDNASNGRSSASTST), 366 to 385 (ASDATQITSKSTATKTVPDM), and 413 to 514 (NGAK…ELQQ). A compositionally biased stretch (low complexity) spans 259 to 274 (VAPTTASNAPSASNTA). Positions 422 to 433 (ADNNSSGTNSLS) are enriched in polar residues. A compositionally biased stretch (acidic residues) spans 434 to 460 (NDDDEQKEDDDDDDDDDVVDVDDEEAD). The segment covering 477 to 514 (TTVTCTSGENSFEFTNDSSSASNDDYTNNIPNLSELQQ) has biased composition (polar residues).

Maternal and zygotic gene product.

It is found in the cytoplasm. Functionally, required for the determination of embryonic dorsoventral polarity. Is involved in transduction of information regulating nuclear import of dorsal protein. The sequence is that of Protein Tube (tub) from Drosophila virilis (Fruit fly).